The primary structure comprises 830 residues: MDVQPARTMRNLPDTLSSLMGFNKHLTPSWIESVSHIIDGLSPTKPQMKVMVEKDENISDDNTESEAKVQKIQDELVSLNAQLKQITLQRREALNNYLDLKGNIRVFCRIRPFHHEESYSSRNLFTLDESNVFLKVAETKRKQYKFDKVFDQFSTQGDVFSEVEPVIKSALDGYNVCIFAYGQTGSGKTYTMEGKPTNLGVIPRGIQTLFNQASECNNRFLFTFSMLEIYMGNIRDLLAPRSKTNGIKNVPSLSIKSDPDGGIEIEDLVAVTVNSFQEVKRLYEMGTRLRSTASTMANSTSSRSHCLIRISLTSLNATERRKATSKLWMIDLGGSERLVKTKATGKRLKEGKAINLSLSALGDVIDALQTKKPHVPYRNSKLTQVLRDSLGCESKTLMLVHISPDEGDLCETICTLGFATRVRSIRLESEEPPEMKARKETLLIDLGQKVNDLEHECEDIRRKIKNLEESMEHLTGPQPTIYSNFDMSHLSSEELKTDVSSNVRNSKNRREASSRLPRFMKPTASSQHRIGLNNRTPIINRLKPPVPPRRRPSSVYAESVMVPVNAAPWQSECSSECSMSLTSDMNWTPSIRDGTECSQDASEYEIKQVIFSEHEKSSHDQVTCYTDYPLAESRDIQIKIEEKGIVDIDNWLHQQIVEKTSTFRSKMVLDIPGVTEAEIHVSSIPSPTTMACTKEDSQVKDEVMGLTLQSSTDYVEDIKQSKTDNQFTAKELCTPPFKEFSSNNEVKGHKNEHPVYHGRPRRSLQEELENCTLEKPNMDSKSHRSHDDKHKTGKFTKFFQALQTAWIGALLALGTVSIGLEHGFFQSLTL.

Positions glutamate 56 to tyrosine 97 form a coiled coil. A Kinesin motor domain is found at asparagine 103–isoleucine 425. Residue glycine 182 to threonine 189 participates in ATP binding. Residues glutamate 434–glycine 476 adopt a coiled-coil conformation.

Belongs to the TRAFAC class myosin-kinesin ATPase superfamily. Kinesin family. KIN-14 subfamily.

This chain is Kinesin-like protein KIN-14B, found in Oryza sativa subsp. japonica (Rice).